Consider the following 632-residue polypeptide: 1-deoxy-D-xylulose-5-phosphate synthase (632 aa).

Residues His87 and 128–130 (GHS) contribute to the thiamine diphosphate site. Residue Asp159 participates in Mg(2+) binding. Thiamine diphosphate is bound by residues 160 to 161 (GA), Asn188, Phe295, and Glu377. Position 188 (Asn188) interacts with Mg(2+).

The protein belongs to the transketolase family. DXPS subfamily. In terms of assembly, homodimer. Mg(2+) is required as a cofactor. It depends on thiamine diphosphate as a cofactor.

It catalyses the reaction D-glyceraldehyde 3-phosphate + pyruvate + H(+) = 1-deoxy-D-xylulose 5-phosphate + CO2. It functions in the pathway metabolic intermediate biosynthesis; 1-deoxy-D-xylulose 5-phosphate biosynthesis; 1-deoxy-D-xylulose 5-phosphate from D-glyceraldehyde 3-phosphate and pyruvate: step 1/1. Its function is as follows. Catalyzes the acyloin condensation reaction between C atoms 2 and 3 of pyruvate and glyceraldehyde 3-phosphate to yield 1-deoxy-D-xylulose-5-phosphate (DXP). The polypeptide is 1-deoxy-D-xylulose-5-phosphate synthase (Stutzerimonas stutzeri (strain A1501) (Pseudomonas stutzeri)).